A 385-amino-acid chain; its full sequence is Rubredoxin-NAD(+) reductase (385 aa).

FAD contacts are provided by residues 8–11 (AGTA), 32–33 (SR), Ile79, Glu156, Asp275, and Ile293.

This sequence belongs to the FAD-dependent oxidoreductase family. In terms of assembly, homodimer. FAD is required as a cofactor.

It localises to the cytoplasm. The enzyme catalyses 2 reduced [rubredoxin] + NAD(+) + H(+) = 2 oxidized [rubredoxin] + NADH. It participates in hydrocarbon metabolism; alkane degradation. Involved in the hydrocarbon hydroxylating system, which transfers electrons from NADH to rubredoxin reductase and then through rubredoxin to alkane 1 monooxygenase. This Pseudomonas putida (Arthrobacter siderocapsulatus) protein is Rubredoxin-NAD(+) reductase (alkT).